The primary structure comprises 342 residues: Protease HtpX homolog (342 aa).

Transmembrane regions (helical) follow at residues 6–26 and 28–48; these read TAML…LIGG and GGMM…YWNS. H130 contacts Zn(2+). E131 is a catalytic residue. Zn(2+) is bound at residue H134. The next 2 membrane-spanning stretches (helical) occupy residues 145-165 and 173-193; these read ITAT…FFGG and GGGI…AMLV. E202 contributes to the Zn(2+) binding site. Residues 290-342 form a disordered region; the sequence is PQHSKPAASGPWGSSAERSTDDPWGVKGGASTRSVPKIGRRGKDNDAPKGPWN.

This sequence belongs to the peptidase M48B family. Zn(2+) is required as a cofactor.

Its subcellular location is the cell inner membrane. This is Protease HtpX homolog from Allorhizobium ampelinum (strain ATCC BAA-846 / DSM 112012 / S4) (Agrobacterium vitis (strain S4)).